Here is a 295-residue protein sequence, read N- to C-terminus: Peptide transport system permease protein SapC (295 aa).

The next 6 membrane-spanning stretches (helical) occupy residues 27–47, 102–122, 129–149, 157–177, 219–239, and 262–282; these read IALF…FASY, LLVV…AGLL, FVGH…AVVI, LWNA…HTIY, VARA…ISLG, and PWTV…SIIF. The ABC transmembrane type-1 domain maps to 98-278; sequence LGSALLVVFS…GFAIIFTILL (181 aa).

It belongs to the binding-protein-dependent transport system permease family. OppBC subfamily.

Its subcellular location is the cell inner membrane. Functionally, involved in a peptide intake transport system that plays a role in the resistance to antimicrobial peptides. The sequence is that of Peptide transport system permease protein SapC (sapC) from Haemophilus influenzae (strain ATCC 51907 / DSM 11121 / KW20 / Rd).